We begin with the raw amino-acid sequence, 385 residues long: Muconate cycloisomerase 1-2 (385 aa).

Lys171 is an active-site residue. Mn(2+) contacts are provided by Glu226 and Asp251.

The protein belongs to the mandelate racemase/muconate lactonizing enzyme family. In terms of assembly, homooctamer. The cofactor is Mn(2+).

The enzyme catalyses (S)-muconolactone = cis,cis-muconate + H(+). It participates in aromatic compound metabolism; beta-ketoadipate pathway; 5-oxo-4,5-dihydro-2-furylacetate from catechol: step 2/3. Functionally, catalyzes a syn cycloisomerization. This Acinetobacter lwoffii protein is Muconate cycloisomerase 1-2 (catB2).